Here is a 48-residue protein sequence, read N- to C-terminus: Lantibiotic salivaricin-A (48 aa).

Positions 1-26 are excised as a propeptide; the sequence is MKNSKDILNNAIEEVSEKELMEVAGG. 2 cross-links (beta-methyllanthionine (Thr-Cys)) span residues 35-40 and 37-47; these read TITDDC and TDDCPNSVFVC. Positions 43–48 form a cross-link, lanthionine (Ser-Cys); the sequence is SVFVCC.

This sequence belongs to the type A lantibiotic family. In terms of processing, maturation of lantibiotics involves the enzymatic conversion of Thr, and Ser into dehydrated AA and the formation of thioether bonds with cysteine. This is followed by membrane translocation and cleavage of the modified precursor.

Functionally, lanthionine-containing peptide antibiotic (lantibiotic) active on Gram-positive bacteria. The bactericidal activity of lantibiotics is based on depolarization of energized bacterial cytoplasmic membranes, initiated by the formation of aqueous transmembrane pores. In Streptococcus salivarius, this protein is Lantibiotic salivaricin-A (salA).